Consider the following 117-residue polypeptide: Fluoride-specific ion channel FluC 2 (117 aa).

Helical transmembrane passes span 1–21 (MISIILVMIGGGFGAIARSAI) and 46–66 (FLIGLTIGLSISISWFPAFFV). Residues Gly71 and Thr74 each coordinate Na(+). A helical transmembrane segment spans residues 95–115 (LFLNYSLLQFIIGFIACYIGY).

This sequence belongs to the fluoride channel Fluc/FEX (TC 1.A.43) family.

The protein resides in the cell membrane. It carries out the reaction fluoride(in) = fluoride(out). Its activity is regulated as follows. Na(+) is not transported, but it plays an essential structural role and its presence is essential for fluoride channel function. In terms of biological role, fluoride-specific ion channel. Important for reducing fluoride concentration in the cell, thus reducing its toxicity. The sequence is that of Fluoride-specific ion channel FluC 2 from Staphylococcus aureus (strain Mu50 / ATCC 700699).